A 734-amino-acid polypeptide reads, in one-letter code: Photosystem I P700 chlorophyll a apoprotein A2 (734 aa).

8 helical membrane passes run 46 to 69 (IFASHFGQLAIIFLWTSGNLFHVA), 135 to 158 (LYTGALFLLFLSALSLIAGWLHLQ), 175 to 199 (LNHHLSGLFGVSSLAWTGHLVHVAI), 273 to 291 (IAHHHLAIAILFLIAGHMY), 330 to 353 (IHFQLGLALASLGVITSLVAQHMY), 369 to 395 (AALYTHHQYIAGFIMTGAFAHGAIFFI), 417 to 439 (AIISHLSWASLFLGFHTLGLYVH), and 517 to 535 (FLVHHAIALGLHTTTLILV). Cys559 and Cys568 together coordinate [4Fe-4S] cluster. Transmembrane regions (helical) follow at residues 575–596 (AFYLAVFWMLNTIGWVTFYWHW) and 643–665 (LSVWAWMFLFGHLVWATGFMFLI). Chlorophyll a-binding residues include His654, Met662, and Tyr670. Trp671 contacts phylloquinone. The helical transmembrane segment at 707 to 727 (LVGLAHFSVGYIFTYAAFLIA) threads the bilayer.

Belongs to the PsaA/PsaB family. In terms of assembly, the PsaA/B heterodimer binds the P700 chlorophyll special pair and subsequent electron acceptors. PSI consists of a core antenna complex that captures photons, and an electron transfer chain that converts photonic excitation into a charge separation. The eukaryotic PSI reaction center is composed of at least 11 subunits. The cofactor is P700 is a chlorophyll a/chlorophyll a' dimer, A0 is one or more chlorophyll a, A1 is one or both phylloquinones and FX is a shared 4Fe-4S iron-sulfur center..

It localises to the plastid. The protein resides in the chloroplast thylakoid membrane. The catalysed reaction is reduced [plastocyanin] + hnu + oxidized [2Fe-2S]-[ferredoxin] = oxidized [plastocyanin] + reduced [2Fe-2S]-[ferredoxin]. Its function is as follows. PsaA and PsaB bind P700, the primary electron donor of photosystem I (PSI), as well as the electron acceptors A0, A1 and FX. PSI is a plastocyanin-ferredoxin oxidoreductase, converting photonic excitation into a charge separation, which transfers an electron from the donor P700 chlorophyll pair to the spectroscopically characterized acceptors A0, A1, FX, FA and FB in turn. Oxidized P700 is reduced on the lumenal side of the thylakoid membrane by plastocyanin. This is Photosystem I P700 chlorophyll a apoprotein A2 from Gossypium hirsutum (Upland cotton).